A 74-amino-acid polypeptide reads, in one-letter code: Sodium channel neurotoxin MeuNaTxalpha-6 (74 aa).

Residues 1–7 (LMTGVES) form the signal peptide. An LCN-type CS-alpha/beta domain is found at 9–73 (RDAYIAKPHN…VPIRIPGKCH (65 aa)). 4 disulfide bridges follow: Cys-19/Cys-72, Cys-23/Cys-45, Cys-31/Cys-55, and Cys-35/Cys-57. Position 74 (Arg-74) is a propeptide, removed by a carboxypeptidase.

The protein belongs to the long (4 C-C) scorpion toxin superfamily. Sodium channel inhibitor family. Alpha subfamily. As to expression, expressed by the venom gland.

The protein localises to the secreted. Alpha toxins bind voltage-independently at site-3 of sodium channels (Nav) and inhibit the inactivation of the activated channels, thereby blocking neuronal transmission. This Mesobuthus eupeus (Lesser Asian scorpion) protein is Sodium channel neurotoxin MeuNaTxalpha-6.